We begin with the raw amino-acid sequence, 160 residues long: Protein-export protein SecB (160 aa).

It belongs to the SecB family. In terms of assembly, homotetramer, a dimer of dimers. One homotetramer interacts with 1 SecA dimer.

The protein localises to the cytoplasm. Its function is as follows. One of the proteins required for the normal export of preproteins out of the cell cytoplasm. It is a molecular chaperone that binds to a subset of precursor proteins, maintaining them in a translocation-competent state. It also specifically binds to its receptor SecA. The polypeptide is Protein-export protein SecB (Orientia tsutsugamushi (strain Boryong) (Rickettsia tsutsugamushi)).